Consider the following 257-residue polypeptide: MLLAIDCGNTNTVFSIWDGTQFLATWRIATDHKRTADEYHVWLSTLLSLTKIEARISEAVISSTVPRVVFNLRVLCNRYYDCRPLVVGKPECRLPVAPRVDQGTTVGPDRLVNTVAGFHLHGGNLIVVDFGTATTFDVVDADGAYIGGVIAPGVNLSLEALHMAAAALPHVDVTKPQQAIGTNTVACIQSGVYWGYIGLVEGIVRQIRLERDSPMKVIATGGLAPLFDQGFNLFDRVEDDLTMQGLVLIHQYNKDLE.

6–13 (DCGNTNTV) provides a ligand contact to ATP. Substrate is bound at residue 107-110 (GPDR). The active-site Proton acceptor is aspartate 109. Aspartate 129 contributes to the K(+) binding site. Residue threonine 132 coordinates ATP. Threonine 184 contacts substrate.

The protein belongs to the type III pantothenate kinase family. Homodimer. Requires NH4(+) as cofactor. The cofactor is K(+).

The protein localises to the cytoplasm. The catalysed reaction is (R)-pantothenate + ATP = (R)-4'-phosphopantothenate + ADP + H(+). The protein operates within cofactor biosynthesis; coenzyme A biosynthesis; CoA from (R)-pantothenate: step 1/5. In terms of biological role, catalyzes the phosphorylation of pantothenate (Pan), the first step in CoA biosynthesis. The polypeptide is Type III pantothenate kinase (Cereibacter sphaeroides (strain ATCC 17029 / ATH 2.4.9) (Rhodobacter sphaeroides)).